The sequence spans 752 residues: Ribonucleases P/MRP protein subunit popl-1 (752 aa).

The interval lysine 638–arginine 663 is disordered. The segment covering threonine 640–lysine 657 has biased composition (basic residues).

As to quaternary structure, component of nuclear RNase P and RNase MRP ribonucleoproteins. Several subunits of RNase P are also part of the RNase MRP complex.

It is found in the nucleus. The protein resides in the nucleolus. The enzyme catalyses Endonucleolytic cleavage of RNA, removing 5'-extranucleotides from tRNA precursor.. Functionally, component of ribonuclease P, a ribonucleoprotein complex that generates mature tRNA molecules by cleaving their 5'-ends. Also a component of the MRP ribonuclease complex, which cleaves pre-rRNA sequences. The polypeptide is Ribonucleases P/MRP protein subunit popl-1 (Caenorhabditis elegans).